A 199-amino-acid polypeptide reads, in one-letter code: Superoxide dismutase [Mn] 2 (199 aa).

Positions 28, 75, 157, and 161 each coordinate Mn(2+).

The protein belongs to the iron/manganese superoxide dismutase family. It depends on Mn(2+) as a cofactor.

It catalyses the reaction 2 superoxide + 2 H(+) = H2O2 + O2. Destroys superoxide anion radicals which are normally produced within the cells and which are toxic to biological systems. In Haloferax volcanii (strain ATCC 29605 / DSM 3757 / JCM 8879 / NBRC 14742 / NCIMB 2012 / VKM B-1768 / DS2) (Halobacterium volcanii), this protein is Superoxide dismutase [Mn] 2 (sod2).